The sequence spans 304 residues: Carnitine monooxygenase reductase subunit (304 aa).

Residues 1–93 (MEQLTPLIKR…SEPKNLFPLA (93 aa)) form the FAD-binding FR-type domain. Residues 219-304 (FTVVLAKSNQ…AKGKKLVLDL (86 aa)) form the 2Fe-2S ferredoxin-type domain. C253, C258, C261, and C291 together coordinate [2Fe-2S] cluster.

The protein belongs to the PDR/VanB family. CntB subfamily. As to quaternary structure, composed of an oxygenase subunit and a reductase subunit. The cofactor is FMN. It depends on [2Fe-2S] cluster as a cofactor.

The enzyme catalyses (R)-carnitine + NADH + O2 + H(+) = (3R)-3-hydroxy-4-oxobutanoate + trimethylamine + NAD(+) + H2O. It carries out the reaction (R)-carnitine + NADPH + O2 + H(+) = (3R)-3-hydroxy-4-oxobutanoate + trimethylamine + NADP(+) + H2O. The protein operates within amine and polyamine metabolism; carnitine metabolism. Its activity is regulated as follows. Inhibited by EDTA. Functionally, converts carnitine to trimethylamine and malic semialdehyde. Acts on both enantiomers. In Acinetobacter pittii (strain PHEA-2), this protein is Carnitine monooxygenase reductase subunit.